The chain runs to 464 residues: MKSAVENLTPTRVKLNVEVPFEELKPSIDSAYKTVASQIQVPGFRKGKVPAKLIDQRVGRGYVLETAINDGLNGWYQAAVQESGIRPLSRPEVEITEVPDPSATDGGLKFAAEVDVRPEIELPDYAGIKVEVAAAESSDADVDKALDELRGRFGTLKSVDRPAADGDFLTIDITATIDGEEVDSAAGLSYQVGAGTMLEGMDEAVTGLSADEDAIFDTTLVGGDHAGEAAQVKVAVKAVKERELPEANDDFAQLASEFDTLAELREDLAKQAAESKVVEQGVEARDKVLDKLVELVEVPVPDSVVEEQLEAHFKEGNGHGDGEHDTEEHREEVRANTARAFQNEIILDAIAEKEEVDVSQNELIDYIVTTASQYGMDPNQFAQIIDQSGQVPMMVSEVRRRKALAVVLGQATVTDSEGNAVDLSDFVRPGGEEEAPAAEVTEADTAEGEATEVPAEDEKAEAKA.

In terms of domain architecture, PPIase FKBP-type spans 166 to 245; that stretch reads GDFLTIDITA…VKAVKERELP (80 aa). A disordered region spans residues 426–464; it reads FVRPGGEEEAPAAEVTEADTAEGEATEVPAEDEKAEAKA. Over residues 432–455 the composition is skewed to acidic residues; sequence EEEAPAAEVTEADTAEGEATEVPA.

This sequence belongs to the FKBP-type PPIase family. Tig subfamily.

The protein resides in the cytoplasm. The catalysed reaction is [protein]-peptidylproline (omega=180) = [protein]-peptidylproline (omega=0). Involved in protein export. Acts as a chaperone by maintaining the newly synthesized protein in an open conformation. Functions as a peptidyl-prolyl cis-trans isomerase. In Pseudarthrobacter chlorophenolicus (strain ATCC 700700 / DSM 12829 / CIP 107037 / JCM 12360 / KCTC 9906 / NCIMB 13794 / A6) (Arthrobacter chlorophenolicus), this protein is Trigger factor.